The chain runs to 375 residues: F-box/kelch-repeat protein At4g39580 (375 aa).

Positions 20 to 66 (PTTNLFLPDDILLSSLSRISRLYYPTFSLVSKSFRSLIASPELYQTR) constitute an F-box domain. Kelch repeat units lie at residues 132–178 (NIYA…VLDG), 179–225 (KIYV…KSVG), and 229–269 (KYHL…VINN).

This is F-box/kelch-repeat protein At4g39580 from Arabidopsis thaliana (Mouse-ear cress).